The following is a 105-amino-acid chain: Small ribosomal subunit protein uS10 (105 aa).

It belongs to the universal ribosomal protein uS10 family. Part of the 30S ribosomal subunit.

In terms of biological role, involved in the binding of tRNA to the ribosomes. The sequence is that of Small ribosomal subunit protein uS10 from Lawsonia intracellularis (strain PHE/MN1-00).